The primary structure comprises 267 residues: 5'-nucleotidase SurE (267 aa).

4 residues coordinate a divalent metal cation: Asp-9, Asp-10, Ser-40, and Asn-97.

This sequence belongs to the SurE nucleotidase family. The cofactor is a divalent metal cation.

It is found in the cytoplasm. It carries out the reaction a ribonucleoside 5'-phosphate + H2O = a ribonucleoside + phosphate. In terms of biological role, nucleotidase that shows phosphatase activity on nucleoside 5'-monophosphates. This is 5'-nucleotidase SurE from Helicobacter pylori (strain ATCC 700392 / 26695) (Campylobacter pylori).